Here is a 528-residue protein sequence, read N- to C-terminus: Nucleobase-ascorbate transporter 5 (528 aa).

The interval 1 to 20 (MSAPKSGGDPLPHPPKEQLP) is disordered. 12 helical membrane passes run 35 to 55 (AVLLGFQHYLVMLGTTVLIPS), 71 to 91 (LIQTILFVAGLNTLLQTVFGT), 93 to 113 (LPAVIGASYTFVPVTISIMLS), 133 to 153 (TQGALIVASTLQIILGFSGLW), 159 to 179 (FLSPLSAAPLVGLVGYGLYEL), 181 to 201 (FPGVAKCIEIGLPGLIILILI), 219 to 239 (FAVIFSVAIVWLYAFFLTLGG), 285 to 305 (FAMMMASFVALVESTGAFIAV), 367 to 387 (AGFMIFFSILGKFGAVFASIP), 390 to 410 (IIAALYCLFFAYVGAGGLSLL), 418 to 438 (FRTLFILGFSIFLGLSIPQYF), and 460 to 479 (MVNVPFSSKAFVGGCVAYLL).

Belongs to the nucleobase:cation symporter-2 (NCS2) (TC 2.A.40) family. Weakly expressed in the vasculature of developing leaves.

Its subcellular location is the membrane. This is Nucleobase-ascorbate transporter 5 (NAT5) from Arabidopsis thaliana (Mouse-ear cress).